Consider the following 248-residue polypeptide: Serine/arginine-rich splicing factor 1 (248 aa).

S2 is modified (N-acetylserine). S2 is subject to Phosphoserine. In terms of domain architecture, RRM 1 spans 16–91; sequence CRIYVGNLPP…YRLRVEFPRS (76 aa). A Glycyl lysine isopeptide (Lys-Gly) (interchain with G-Cter in SUMO2) cross-link involves residue K30. Residue K38 is modified to N6-acetyllysine; alternate. K38 participates in a covalent cross-link: Glycyl lysine isopeptide (Lys-Gly) (interchain with G-Cter in SUMO2); alternate. The tract at residues 88–134 is disordered; the sequence is FPRSGRGTGRGGGGGGGGGAPRGRYGPPSRRSENRVVVSGLPPSGSW. 3 positions are modified to asymmetric dimethylarginine; alternate: R93, R97, and R109. Omega-N-methylarginine; alternate is present on residues R93, R97, and R109. A compositionally biased stretch (gly residues) spans 93 to 108; sequence RGTGRGGGGGGGGGAP. Position 111 is an omega-N-methylarginine (R111). Residues 121–195 form the RRM 2 domain; that stretch reads NRVVVSGLPP…ETAYIRVKVD (75 aa). The residue at position 133 (S133) is a Phosphoserine. At K179 the chain carries N6-acetyllysine. Residues 191-248 are disordered; it reads RVKVDGPRSPSYGRSRSRSRSRSRNRSRSNSRSRSYSPRRSRGSPRYSPRHSRSRSRT. Positions 198–247 are interaction with SAFB1; the sequence is RSPSYGRSRSRSRSRSRNRSRSNSRSRSYSPRRSRGSPRYSPRHSRSRSR. Phosphoserine is present on residues S199 and S201. Y202 is modified (phosphotyrosine). 6 positions are modified to phosphoserine: S205, S207, S209, S231, S234, and S238. The segment covering 205–248 has biased composition (basic residues); sequence SRSRSRSRSRNRSRSNSRSRSYSPRRSRGSPRYSPRHSRSRSRT.

This sequence belongs to the splicing factor SR family. As to quaternary structure, consists of two polypeptides of p32 and p33. Identified in the spliceosome C complex. Component of a ribonucleoprotein complex containing mRNAs and RNA-binding proteins including DDX5, HNRNPH2 and SRSF1 as well as splicing regulator ARVCF. In vitro, self-associates and binds SRSF2, SNRNP70 and U2AF1 but not U2AF2. Binds SREK1/SFRS12. Interacts with SAFB/SAFB1. Interacts with PSIP1/LEDGF. Interacts with RSRC1 (via Arg/Ser-rich domain). Interacts with ZRSR2/U2AF1-RS2. Interacts with CCDC55 (via C-terminus). Interacts with SRPK1 and a sliding docking interaction is essential for its sequential and processive phosphorylation by SRPK1. Interacts with NXF1. Interacts with CCNL1, CCNL2 and CDK11B. Interacts with RRP1B. Interacts (when phosphorylated in its RS domain) with TNPO3; promoting nuclear import. Interacts with ILDR1 (via C-terminus) and ILDR2. Phosphorylated by CLK1, CLK2, CLK3 and CLK4. Phosphorylated by SRPK1 at multiple serines in its RS domain via a directional (C-terminal to N-terminal) and a dual-track mechanism incorporating both processive phosphorylation (in which the kinase stays attached to the substrate after each round of phosphorylation) and distributive phosphorylation steps (in which the kinase and substrate dissociate after each phosphorylation event). The RS domain of SRSF1 binds to a docking groove in the large lobe of the kinase domain of SRPK1 and this induces certain structural changes in SRPK1 and/or RRM 2 domain of SRSF1, allowing RRM 2 to bind the kinase and initiate phosphorylation. The cycles continue for several phosphorylation steps in a processive manner (steps 1-8) until the last few phosphorylation steps (approximately steps 9-12). During that time, a mechanical stress induces the unfolding of the beta-4 motif in RRM 2, which then docks at the docking groove of SRPK1. This also signals RRM 2 to begin to dissociate, which facilitates SRSF1 dissociation after phosphorylation is completed. Post-translationally, asymmetrically dimethylated at arginines, probably by PRMT1, methylation promotes localization to nuclear speckles.

Its subcellular location is the cytoplasm. It localises to the nucleus speckle. In terms of biological role, plays a role in preventing exon skipping, ensuring the accuracy of splicing and regulating alternative splicing. Interacts with other spliceosomal components, via the RS domains, to form a bridge between the 5'- and 3'-splice site binding components, U1 snRNP and U2AF. Can stimulate binding of U1 snRNP to a 5'-splice site-containing pre-mRNA. Binds to purine-rich RNA sequences, either the octamer, 5'-RGAAGAAC-3' (r=A or G) or the decamers, AGGACAGAGC/AGGACGAAGC. Binds preferentially to the 5'-CGAGGCG-3' motif in vitro. Three copies of the octamer constitute a powerful splicing enhancer in vitro, the ASF/SF2 splicing enhancer (ASE) which can specifically activate ASE-dependent splicing. May function as export adapter involved in mRNA nuclear export through the TAP/NXF1 pathway. The chain is Serine/arginine-rich splicing factor 1 (SRSF1) from Pongo abelii (Sumatran orangutan).